A 127-amino-acid chain; its full sequence is Large ribosomal subunit protein bL17 (127 aa).

This sequence belongs to the bacterial ribosomal protein bL17 family. As to quaternary structure, part of the 50S ribosomal subunit. Contacts protein L32.

The chain is Large ribosomal subunit protein bL17 from Leuconostoc citreum (strain KM20).